The chain runs to 266 residues: Small ribosomal subunit protein uS2 (266 aa).

The protein belongs to the universal ribosomal protein uS2 family.

The polypeptide is Small ribosomal subunit protein uS2 (Bartonella tribocorum (strain CIP 105476 / IBS 506)).